Reading from the N-terminus, the 524-residue chain is Glutamyl-tRNA(Gln) amidotransferase subunit A (524 aa).

Active-site charge relay system residues include K109 and S184. Catalysis depends on S208, which acts as the Acyl-ester intermediate.

The protein belongs to the amidase family. GatA subfamily. Heterotrimer of A, B and C subunits.

It carries out the reaction L-glutamyl-tRNA(Gln) + L-glutamine + ATP + H2O = L-glutaminyl-tRNA(Gln) + L-glutamate + ADP + phosphate + H(+). Its function is as follows. Allows the formation of correctly charged Gln-tRNA(Gln) through the transamidation of misacylated Glu-tRNA(Gln) in organisms which lack glutaminyl-tRNA synthetase. The reaction takes place in the presence of glutamine and ATP through an activated gamma-phospho-Glu-tRNA(Gln). This chain is Glutamyl-tRNA(Gln) amidotransferase subunit A, found in Tropheryma whipplei (strain TW08/27) (Whipple's bacillus).